A 237-amino-acid polypeptide reads, in one-letter code: Leucyl/phenylalanyl-tRNA--protein transferase (237 aa).

Belongs to the L/F-transferase family.

It localises to the cytoplasm. The enzyme catalyses N-terminal L-lysyl-[protein] + L-leucyl-tRNA(Leu) = N-terminal L-leucyl-L-lysyl-[protein] + tRNA(Leu) + H(+). The catalysed reaction is N-terminal L-arginyl-[protein] + L-leucyl-tRNA(Leu) = N-terminal L-leucyl-L-arginyl-[protein] + tRNA(Leu) + H(+). It catalyses the reaction L-phenylalanyl-tRNA(Phe) + an N-terminal L-alpha-aminoacyl-[protein] = an N-terminal L-phenylalanyl-L-alpha-aminoacyl-[protein] + tRNA(Phe). Functionally, functions in the N-end rule pathway of protein degradation where it conjugates Leu, Phe and, less efficiently, Met from aminoacyl-tRNAs to the N-termini of proteins containing an N-terminal arginine or lysine. The polypeptide is Leucyl/phenylalanyl-tRNA--protein transferase (aat) (Vibrio vulnificus (strain CMCP6)).